Here is a 712-residue protein sequence, read N- to C-terminus: Lactoperoxidase (712 aa).

The signal sequence occupies residues 1-22 (MWVCLQLPVFLASVTLFEVAAS). Residues 23–100 (DTIAQAASTT…WEESFKRLRR (78 aa)) constitute a propeptide that is removed on maturation. The N-linked (GlcNAc...) (complex) asparagine; alternate glycan is linked to Asn106. An N-linked (GlcNAc...) (hybrid) asparagine; alternate glycan is attached at Asn106. 4 disulfide bridges follow: Cys123-Cys284, Cys132-Cys145, Cys246-Cys256, and Cys250-Cys274. Residue Asn212 is glycosylated (N-linked (GlcNAc...) (complex) asparagine; alternate). N-linked (GlcNAc...) (high mannose) asparagine; alternate glycosylation occurs at Asn212. Asp225 provides a ligand contact to heme b. His226 functions as the Proton acceptor in the catalytic mechanism. Asp227 is a Ca(2+) binding site. Ca(2+) contacts are provided by Thr301, Phe303, Asp305, and Ser307. Ser315 carries the phosphoserine modification. Residue Asn322 is glycosylated (N-linked (GlcNAc...) (high mannose) asparagine). Cysteines 354 and 365 form a disulfide. N-linked (GlcNAc...) asparagine glycosylation occurs at Asn358. Residue Glu375 participates in heme b binding. Asn449 is a glycosylation site (N-linked (GlcNAc...) (complex) asparagine; alternate). N-linked (GlcNAc...) (hybrid) asparagine; alternate glycosylation occurs at Asn449. Asn449 carries an N-linked (GlcNAc...) (high mannose) asparagine; alternate glycan. His468 is a heme b binding site. 3'-nitrotyrosine is present on Tyr482. Disulfide bonds link Cys573–Cys630 and Cys671–Cys696.

This sequence belongs to the peroxidase family. XPO subfamily. Requires Ca(2+) as cofactor. Heme b is required as a cofactor. Mammary gland; milk.

It is found in the secreted. The protein localises to the cytoplasm. It carries out the reaction 2 a phenolic donor + H2O2 = 2 a phenolic radical donor + 2 H2O. The enzyme catalyses thiocyanate + H2O2 + H(+) = hypothiocyanous acid + H2O. It catalyses the reaction iodide + H2O2 = hypoiodite + H2O. In terms of biological role, heme-containing oxidoreductase which catalyzes the conversion of thiocyanate (SCN(-)) into antimicrobial agent hypothiocyanous acid (OSCN(-)) in the presence of hydrogen peroxide (H2O2). Also involved in the conversion of iodide (I(-)) into hypoiodite (IO(-)) in the presence of H2O2. Responsible for the inactivation of a wide range of micro-organisms and hence, important component of defense mechanism. Shows antibacterial properties against E.coli, K.pneumoniae, P.aeruginosa, S.sonnei, S.saphrophyticus, S.epidermidis and S.dysenteriae. May protect the udder from infection and may promote growth in newborns. May be implicated in airway host defense against infection. May contribute to maintaining an appropriate H2O2 cellular level, therefore protecting cells from H2O2-caused injuries and inflammation. This Bubalus bubalis (Domestic water buffalo) protein is Lactoperoxidase.